The following is a 135-amino-acid chain: MGVRKRERAEQIKEAKKQVAFAKLNNCPTSPRKMRLMADLVRGEKVEKALHILKFSKKEASNRLEKLLVSAIANWQAKNEDANLEEAELFVKEIRVDGGSMLKRLRPAPQGRAHRIRKRSNHVTLVLGANNNTQS.

This sequence belongs to the universal ribosomal protein uL22 family. Part of the 50S ribosomal subunit.

This protein binds specifically to 23S rRNA; its binding is stimulated by other ribosomal proteins, e.g. L4, L17, and L20. It is important during the early stages of 50S assembly. It makes multiple contacts with different domains of the 23S rRNA in the assembled 50S subunit and ribosome. Its function is as follows. The globular domain of the protein is located near the polypeptide exit tunnel on the outside of the subunit, while an extended beta-hairpin is found that lines the wall of the exit tunnel in the center of the 70S ribosome. In Christiangramia forsetii (strain DSM 17595 / CGMCC 1.15422 / KT0803) (Gramella forsetii), this protein is Large ribosomal subunit protein uL22.